Consider the following 410-residue polypeptide: Tryptophan synthase beta chain (410 aa).

K98 carries the N6-(pyridoxal phosphate)lysine modification.

Belongs to the TrpB family. Tetramer of two alpha and two beta chains. The cofactor is pyridoxal 5'-phosphate.

The enzyme catalyses (1S,2R)-1-C-(indol-3-yl)glycerol 3-phosphate + L-serine = D-glyceraldehyde 3-phosphate + L-tryptophan + H2O. The protein operates within amino-acid biosynthesis; L-tryptophan biosynthesis; L-tryptophan from chorismate: step 5/5. Functionally, the beta subunit is responsible for the synthesis of L-tryptophan from indole and L-serine. In Roseobacter denitrificans (strain ATCC 33942 / OCh 114) (Erythrobacter sp. (strain OCh 114)), this protein is Tryptophan synthase beta chain.